We begin with the raw amino-acid sequence, 119 residues long: Fluoride-specific ion channel FluC (119 aa).

Transmembrane regions (helical) follow at residues 37 to 54, 61 to 83, and 93 to 112; these read LFANWTGALLIGIFAETV, LLLITGFLGSLTTLSGFSLETVT, and ALSNIFLHTAGSLLLTWLGL. Glycine 69 and threonine 72 together coordinate Na(+).

The protein belongs to the fluoride channel Fluc/FEX (TC 1.A.43) family.

It is found in the cell inner membrane. It carries out the reaction fluoride(in) = fluoride(out). Na(+) is not transported, but it plays an essential structural role and its presence is essential for fluoride channel function. Its function is as follows. Fluoride-specific ion channel. Important for reducing fluoride concentration in the cell, thus reducing its toxicity. In Neisseria meningitidis serogroup C (strain 053442), this protein is Fluoride-specific ion channel FluC.